A 507-amino-acid chain; its full sequence is Wax ester synthase/diacylglycerol acyltransferase 5 (507 aa).

The Cytoplasmic segment spans residues 1–211 (MEIKIRRRRG…LKTSSRCYSR (211 aa)). Residue H161 is the Proton acceptor of the active site. The helical transmembrane segment at 212–232 (FFWLVMVLWSAALLVLNTVCD) threads the bilayer. Residues 233 to 507 (ALEFIATALF…VVVQERTSTQ (275 aa)) lie on the Lumenal side of the membrane. 2 N-linked (GlcNAc...) asparagine glycosylation sites follow: N314 and N421.

It in the N-terminal section; belongs to the long-chain O-acyltransferase family. As to expression, mostly expressed in flowers and siliques.

The protein localises to the cell membrane. The protein resides in the endoplasmic reticulum membrane. The enzyme catalyses a long chain fatty alcohol + a fatty acyl-CoA = a wax ester + CoA. It catalyses the reaction an acyl-CoA + a 1,2-diacyl-sn-glycerol = a triacyl-sn-glycerol + CoA. Its pathway is glycerolipid metabolism; triacylglycerol biosynthesis. It functions in the pathway lipid metabolism. Functionally, bifunctional wax ester synthase/diacylglycerol acyltransferase. Involved in cuticular wax biosynthesis. The polypeptide is Wax ester synthase/diacylglycerol acyltransferase 5 (Arabidopsis thaliana (Mouse-ear cress)).